We begin with the raw amino-acid sequence, 334 residues long: Holliday junction branch migration complex subunit RuvB (334 aa).

The interval 4-184 (ADRLVSAGVI…FGIVQRLEFY (181 aa)) is large ATPase domain (RuvB-L). Residues isoleucine 23, arginine 24, glycine 65, lysine 68, threonine 69, threonine 70, 131-133 (EDY), arginine 174, tyrosine 184, and arginine 221 each bind ATP. Position 69 (threonine 69) interacts with Mg(2+). The segment at 185–255 (RVEDLQHIVG…VASRALDMLS (71 aa)) is small ATPAse domain (RuvB-S). Residues 258–334 (SEGFDYMDRK…YKHFGITREG (77 aa)) form a head domain (RuvB-H) region. DNA contacts are provided by arginine 294, arginine 313, and arginine 318.

Belongs to the RuvB family. In terms of assembly, homohexamer. Forms an RuvA(8)-RuvB(12)-Holliday junction (HJ) complex. HJ DNA is sandwiched between 2 RuvA tetramers; dsDNA enters through RuvA and exits via RuvB. An RuvB hexamer assembles on each DNA strand where it exits the tetramer. Each RuvB hexamer is contacted by two RuvA subunits (via domain III) on 2 adjacent RuvB subunits; this complex drives branch migration. In the full resolvosome a probable DNA-RuvA(4)-RuvB(12)-RuvC(2) complex forms which resolves the HJ.

Its subcellular location is the cytoplasm. It carries out the reaction ATP + H2O = ADP + phosphate + H(+). In terms of biological role, the RuvA-RuvB-RuvC complex processes Holliday junction (HJ) DNA during genetic recombination and DNA repair, while the RuvA-RuvB complex plays an important role in the rescue of blocked DNA replication forks via replication fork reversal (RFR). RuvA specifically binds to HJ cruciform DNA, conferring on it an open structure. The RuvB hexamer acts as an ATP-dependent pump, pulling dsDNA into and through the RuvAB complex. RuvB forms 2 homohexamers on either side of HJ DNA bound by 1 or 2 RuvA tetramers; 4 subunits per hexamer contact DNA at a time. Coordinated motions by a converter formed by DNA-disengaged RuvB subunits stimulates ATP hydrolysis and nucleotide exchange. Immobilization of the converter enables RuvB to convert the ATP-contained energy into a lever motion, pulling 2 nucleotides of DNA out of the RuvA tetramer per ATP hydrolyzed, thus driving DNA branch migration. The RuvB motors rotate together with the DNA substrate, which together with the progressing nucleotide cycle form the mechanistic basis for DNA recombination by continuous HJ branch migration. Branch migration allows RuvC to scan DNA until it finds its consensus sequence, where it cleaves and resolves cruciform DNA. The sequence is that of Holliday junction branch migration complex subunit RuvB from Erwinia tasmaniensis (strain DSM 17950 / CFBP 7177 / CIP 109463 / NCPPB 4357 / Et1/99).